The chain runs to 278 residues: Pantothenate synthetase (278 aa).

An ATP-binding site is contributed by 31-38 (MGALHEGH). His-38 (proton donor) is an active-site residue. Gln-62 contributes to the (R)-pantoate binding site. Gln-62 lines the beta-alanine pocket. ATP is bound at residue 148–151 (GEKD). Gln-154 is a binding site for (R)-pantoate. ATP contacts are provided by residues Leu-177 and 185–188 (MSSR).

Belongs to the pantothenate synthetase family. In terms of assembly, homodimer.

The protein localises to the cytoplasm. It catalyses the reaction (R)-pantoate + beta-alanine + ATP = (R)-pantothenate + AMP + diphosphate + H(+). It functions in the pathway cofactor biosynthesis; (R)-pantothenate biosynthesis; (R)-pantothenate from (R)-pantoate and beta-alanine: step 1/1. In terms of biological role, catalyzes the condensation of pantoate with beta-alanine in an ATP-dependent reaction via a pantoyl-adenylate intermediate. The sequence is that of Pantothenate synthetase from Acidiphilium cryptum (strain JF-5).